Reading from the N-terminus, the 98-residue chain is Protein FAM24A (98 aa).

The first 29 residues, 1–29, serve as a signal peptide directing secretion; that stretch reads MFDLRTKVMIGIASTLLIAAIMLITLVFC.

Belongs to the FAM24 family.

The protein resides in the secreted. The sequence is that of Protein FAM24A (Fam24a) from Mus musculus (Mouse).